The primary structure comprises 512 residues: Cytochrome P450 72A13 (512 aa).

The helical transmembrane segment at 2-22 (EISVASVTVSVAVVVVSWWVW) threads the bilayer. C460 is a binding site for heme.

It belongs to the cytochrome P450 family. Requires heme as cofactor.

It localises to the membrane. This Arabidopsis thaliana (Mouse-ear cress) protein is Cytochrome P450 72A13 (CYP72A13).